Consider the following 97-residue polypeptide: Small ribosomal subunit protein bS20 (97 aa).

The protein belongs to the bacterial ribosomal protein bS20 family.

Its function is as follows. Binds directly to 16S ribosomal RNA. The protein is Small ribosomal subunit protein bS20 of Prochlorococcus marinus subsp. pastoris (strain CCMP1986 / NIES-2087 / MED4).